We begin with the raw amino-acid sequence, 462 residues long: Calcitonin gene-related peptide type 1 receptor (462 aa).

Residues 1-22 (MEKKYILYFLFLLPFFMILVIA) form the signal peptide. At 23 to 140 (ETEEENPDDL…NTHEKVQTAL (118 aa)) the chain is on the extracellular side. 3 cysteine pairs are disulfide-bonded: Cys-49/Cys-75, Cys-66/Cys-106, and Cys-89/Cys-128. N-linked (GlcNAc...) asparagine glycans are attached at residues Asn-67, Asn-119, and Asn-124. The helical transmembrane segment at 141 to 165 (NLFYLTIIGHGLSIASLLISLGIFF) threads the bilayer. Residues 166-176 (YFKSLSCQRIT) are Cytoplasmic-facing. A helical membrane pass occupies residues 177 to 199 (LHKNLFFSFVCNSIVTIIHLTAV). The Extracellular segment spans residues 200–210 (ANNQALVATNP). A helical membrane pass occupies residues 211–239 (VSCKVFQFIHLYLMGCNYFWMLCEGIYLH). The Cytoplasmic portion of the chain corresponds to 240–253 (TLIVVAVFAEKQHL). A helical membrane pass occupies residues 254 to 274 (MWYYFLGWGFPLIPACIHAVA). Over 275 to 290 (RRLYYNDNCWISSDTH) the chain is Extracellular. A required for RAMP3 interaction region spans residues 289–290 (TH). Residues 291-315 (LLYIIHGPICAALLVNLFFLLNIVR) traverse the membrane as a helical segment. The Cytoplasmic portion of the chain corresponds to 316–330 (VLITKLKVTHQAESN). The helical transmembrane segment at 331–352 (LYMKAVRATLILVPLLGIEFVL) threads the bilayer. Residues 353 to 367 (IPWRPEGKIAEEVYD) lie on the Extracellular side of the membrane. The chain crosses the membrane as a helical span at residues 368–388 (YIMHILVHYQGLLVSTIYCFF). Residues 389-462 (NGEVQAILRR…IVIKPEKLYD (74 aa)) are Cytoplasmic-facing. Ser-421 and Ser-446 each carry phosphoserine.

The protein belongs to the G-protein coupled receptor 2 family. In terms of assembly, heterodimer of CALCRL and RAMP1; the receptor complex functions as CGRP receptor. Heterodimer of CALCRL and RAMP2 or CALCRL and RAMP3; the complexes function as adrenomedullin receptor. In terms of tissue distribution, detected in lung and coronary artery.

Its subcellular location is the cell membrane. In terms of biological role, g protein-coupled receptor which specificity is determined by its interaction with receptor-activity-modifying proteins (RAMPs). Together with RAMP1, form the receptor complex for calcitonin-gene-related peptides CALCA/CGRP1 and CALCB/CGRP2. Together with RAMP2 or RAMP3, function as receptor complexes for adrenomedullin (ADM and ADM2). Ligand binding causes a conformation change that triggers signaling via guanine nucleotide-binding proteins (G proteins) and modulates the activity of downstream effectors. Activates cAMP-dependent pathway. In Sus scrofa (Pig), this protein is Calcitonin gene-related peptide type 1 receptor (CALCRL).